A 121-amino-acid chain; its full sequence is Securin (121 aa).

Residues 1 to 24 (RATEKSVKTNGPLKQKQTTFSAKK) are disordered. Short sequence motifs (TEK-box) lie at residues 3–5 (TEK) and 26–28 (TEK). Positions 93 to 121 (LGPPSPLNMPSPPWESDVLQSPSSILSTL) are disordered. Residues 95 to 105 (PPSPLNMPSPP) carry the SH3-binding motif. Positions 95-105 (PPSPLNMPSPP) are enriched in pro residues. Phosphoserine; by CDK1 is present on S97. A compositionally biased stretch (polar residues) spans 110 to 121 (VLQSPSSILSTL).

The protein belongs to the securin family. Interacts with the caspase-like ESPL1, and prevents its protease activity probably by covering its active site. Interacts with p53/TP53 and blocks its activity probably by blocking its binding to DNA. Interacts with the Ku 70 kDa subunit of ds-DNA kinase. Interacts with PTTG1IP. Interacts with RPS10 and DNAJA1. Phosphorylated by CDK1 during mitosis. In terms of processing, phosphorylated in vitro by ds-DNA kinase. Post-translationally, ubiquitinated through 'Lys-11' linkage of ubiquitin moieties by the anaphase promoting complex (APC) at the onset of anaphase, conducting to its degradation. 'Lys-11'-linked ubiquitination is mediated by the E2 ligase UBE2C/UBCH10.

The protein resides in the cytoplasm. It is found in the nucleus. Its function is as follows. Regulatory protein, which plays a central role in chromosome stability, in the p53/TP53 pathway, and DNA repair. Probably acts by blocking the action of key proteins. During the mitosis, it blocks Separase/ESPL1 function, preventing the proteolysis of the cohesin complex and the subsequent segregation of the chromosomes. At the onset of anaphase, it is ubiquitinated, conducting to its destruction and to the liberation of ESPL1. Its function is however not limited to a blocking activity, since it is required to activate ESPL1. Negatively regulates the transcriptional activity and related apoptosis activity of p53/TP53. The negative regulation of p53/TP53 may explain the strong transforming capability of the protein when it is overexpressed. May also play a role in DNA repair via its interaction with Ku, possibly by connecting DNA damage-response pathways with sister chromatid separation. This Sus scrofa (Pig) protein is Securin (PTTG1).